Reading from the N-terminus, the 954-residue chain is Bifunctional endo-1,4-beta-xylanase XylA (954 aa).

Residues 1-27 (MKLSKIKKVLSGTVSALMIASAAPVVA) constitute a signal peptide (or 28, or 29). The region spanning 29–236 (AADQQTRGNV…SNGSANVKSV (208 aa)) is the GH11 domain. The active-site Nucleophile is the glutamate 122. The active-site Proton donor is glutamate 223. Residues 233 to 243 (VKSVSVTQGGS) show a composition bias toward polar residues. Positions 233–628 (VKSVSVTQGG…NNNNSAGSSD (396 aa)) are disordered. Residues 246 to 622 (NGGQQQNNDW…WNQGQQNNNN (377 aa)) are compositionally biased toward low complexity. In terms of domain architecture, GH10 spans 624–952 (AGSSDSLKGA…KPAYDRVMAL (329 aa)). The Proton donor role is filled by glutamate 774. The Nucleophile role is filled by glutamate 884.

This sequence in the N-terminal section; belongs to the glycosyl hydrolase 11 (cellulase G) family. It in the C-terminal section; belongs to the glycosyl hydrolase 10 (cellulase F) family.

The enzyme catalyses Endohydrolysis of (1-&gt;4)-beta-D-xylosidic linkages in xylans.. Its pathway is glycan degradation; xylan degradation. Functionally, xylanase domain releases more xylo-oligosaccharides and GH10 domain more xylose. In Ruminococcus flavefaciens, this protein is Bifunctional endo-1,4-beta-xylanase XylA (xynA).